A 423-amino-acid chain; its full sequence is Type II methyltransferase M.NlaIV (423 aa).

Residues 4-423 (IKFIDLFSGM…AVSERLLHTL (420 aa)) form the SAM-dependent MTase C5-type domain. C80 is a catalytic residue.

Belongs to the class I-like SAM-binding methyltransferase superfamily. C5-methyltransferase family.

The enzyme catalyses a 2'-deoxycytidine in DNA + S-adenosyl-L-methionine = a 5-methyl-2'-deoxycytidine in DNA + S-adenosyl-L-homocysteine + H(+). Its function is as follows. A methylase that recognizes the double-stranded sequence 5'-GGNNCC-3', methylates C-? on both strands, and protects the DNA from cleavage by the NlaIV endonuclease. The sequence is that of Type II methyltransferase M.NlaIV (nlaIVM) from Neisseria lactamica.